The primary structure comprises 430 residues: Ribosomal protein uS12 methylthiotransferase RimO (430 aa).

The 117-residue stretch at 2 to 118 (AKIFTISLGC…IDNVIKRPKH (117 aa)) folds into the MTTase N-terminal domain. 6 residues coordinate [4Fe-4S] cluster: cysteine 11, cysteine 47, cysteine 81, cysteine 150, cysteine 154, and cysteine 157. Positions 136 to 368 (LTAPHSAYLK…AQSRVIDSIN (233 aa)) constitute a Radical SAM core domain. The TRAM domain maps to 369-430 (RKLKGKTVKV…KGYNRTGKII (62 aa)).

The protein belongs to the methylthiotransferase family. RimO subfamily. The cofactor is [4Fe-4S] cluster.

It localises to the cytoplasm. The catalysed reaction is L-aspartate(89)-[ribosomal protein uS12]-hydrogen + (sulfur carrier)-SH + AH2 + 2 S-adenosyl-L-methionine = 3-methylsulfanyl-L-aspartate(89)-[ribosomal protein uS12]-hydrogen + (sulfur carrier)-H + 5'-deoxyadenosine + L-methionine + A + S-adenosyl-L-homocysteine + 2 H(+). Functionally, catalyzes the methylthiolation of an aspartic acid residue of ribosomal protein uS12. The sequence is that of Ribosomal protein uS12 methylthiotransferase RimO from Elusimicrobium minutum (strain Pei191).